The following is a 347-amino-acid chain: 4-hydroxy-tetrahydrodipicolinate reductase 1, chloroplastic (347 aa).

Residues 1–51 (MATNGLMASSSVFLHRPRIAFASRTNQTVGKYGKGRVSFMGIGTRRLPVVL) constitute a chloroplast transit peptide. Residue serine 52 is modified to N-acetylserine. NAD(+) contacts are provided by residues 79–84 (GCSGKM), 171–173 (GTT), and 194–197 (SPQM). The Proton donor/acceptor role is filled by histidine 230. Lysine 234 serves as the catalytic Proton donor. A (S)-2,3,4,5-tetrahydrodipicolinate-binding site is contributed by 239–240 (GT).

Belongs to the DapB family.

The protein resides in the plastid. Its subcellular location is the chloroplast. It catalyses the reaction (S)-2,3,4,5-tetrahydrodipicolinate + NAD(+) + H2O = (2S,4S)-4-hydroxy-2,3,4,5-tetrahydrodipicolinate + NADH + H(+). The catalysed reaction is (S)-2,3,4,5-tetrahydrodipicolinate + NADP(+) + H2O = (2S,4S)-4-hydroxy-2,3,4,5-tetrahydrodipicolinate + NADPH + H(+). It participates in amino-acid biosynthesis; L-lysine biosynthesis via DAP pathway; (S)-tetrahydrodipicolinate from L-aspartate: step 4/4. Its function is as follows. Catalyzes the conversion of 4-hydroxy-tetrahydrodipicolinate (HTPA) to tetrahydrodipicolinate. This is 4-hydroxy-tetrahydrodipicolinate reductase 1, chloroplastic (DAPB1) from Arabidopsis thaliana (Mouse-ear cress).